A 407-amino-acid chain; its full sequence is Methylthioribose kinase (407 aa).

Residues Asn40, Lys57, and 111-113 (EDL) each bind ATP. Asp229 is a substrate binding site. ATP is bound at residue 246 to 248 (DAE). Substrate is bound at residue Arg344.

The protein belongs to the methylthioribose kinase family. In terms of assembly, homodimer.

The enzyme catalyses 5-(methylsulfanyl)-D-ribose + ATP = 5-(methylsulfanyl)-alpha-D-ribose 1-phosphate + ADP + H(+). It functions in the pathway amino-acid biosynthesis; L-methionine biosynthesis via salvage pathway; S-methyl-5-thio-alpha-D-ribose 1-phosphate from S-methyl-5'-thioadenosine (hydrolase route): step 2/2. Its function is as follows. Catalyzes the phosphorylation of methylthioribose into methylthioribose-1-phosphate. In Yersinia pseudotuberculosis serotype IB (strain PB1/+), this protein is Methylthioribose kinase.